A 399-amino-acid chain; its full sequence is S-adenosylmethionine synthase (399 aa).

H17 serves as a coordination point for ATP. D19 lines the Mg(2+) pocket. E45 lines the K(+) pocket. L-methionine contacts are provided by E58 and Q101. A flexible loop region spans residues 101 to 111; the sequence is QSADIAMGVDQ. Residues 177 to 179, 244 to 245, D253, 259 to 260, A276, and K280 each bind ATP; these read DGK, RF, and RK. D253 is an L-methionine binding site. Residue K284 participates in L-methionine binding.

It belongs to the AdoMet synthase family. As to quaternary structure, homotetramer; dimer of dimers. Mg(2+) serves as cofactor. Requires K(+) as cofactor.

It localises to the cytoplasm. The enzyme catalyses L-methionine + ATP + H2O = S-adenosyl-L-methionine + phosphate + diphosphate. It participates in amino-acid biosynthesis; S-adenosyl-L-methionine biosynthesis; S-adenosyl-L-methionine from L-methionine: step 1/1. Its function is as follows. Catalyzes the formation of S-adenosylmethionine (AdoMet) from methionine and ATP. The overall synthetic reaction is composed of two sequential steps, AdoMet formation and the subsequent tripolyphosphate hydrolysis which occurs prior to release of AdoMet from the enzyme. The protein is S-adenosylmethionine synthase of Bacillus thuringiensis subsp. konkukian (strain 97-27).